The chain runs to 467 residues: Phosphomethylpyrimidine synthase (467 aa).

Residues N80, M109, Y139, H175, 195 to 197 (SRG), 236 to 239 (DSLR), and E275 contribute to the substrate site. Zn(2+) is bound at residue H279. Residue Y302 coordinates substrate. H343 contributes to the Zn(2+) binding site. [4Fe-4S] cluster-binding residues include C423, C426, and C431.

Belongs to the ThiC family. It depends on [4Fe-4S] cluster as a cofactor.

The catalysed reaction is 5-amino-1-(5-phospho-beta-D-ribosyl)imidazole + S-adenosyl-L-methionine = 4-amino-2-methyl-5-(phosphooxymethyl)pyrimidine + CO + 5'-deoxyadenosine + formate + L-methionine + 3 H(+). The protein operates within cofactor biosynthesis; thiamine diphosphate biosynthesis. Functionally, catalyzes the synthesis of the hydroxymethylpyrimidine phosphate (HMP-P) moiety of thiamine from aminoimidazole ribotide (AIR) in a radical S-adenosyl-L-methionine (SAM)-dependent reaction. The sequence is that of Phosphomethylpyrimidine synthase from Synechococcus sp. (strain WH7803).